The following is a 297-amino-acid chain: Signal-transducing adaptor protein 1 (297 aa).

A PH domain is found at Pro-25–Glu-121. Tyr-170 carries the post-translational modification Phosphotyrosine. In terms of domain architecture, SH2 spans Glu-179 to Ala-273. Positions His-271–Ala-297 are disordered.

In terms of assembly, interacts with URI1; the interaction is phosphorylation-dependent occurs in a growth-dependent manner. Interacts with KIT and CSF1R. In terms of processing, phosphorylated on tyrosine by TEC. Phosphorylated on tyrosine by KIT. In terms of tissue distribution, expression restricted to the bone marrow.

The protein resides in the nucleus. Its subcellular location is the cytoplasm. The protein localises to the mitochondrion. Functionally, may function as an adapter molecule downstream of KIT in the proliferation or differentiation of hematopoietic stem cells. The polypeptide is Signal-transducing adaptor protein 1 (Stap1) (Mus musculus (Mouse)).